Here is a 572-residue protein sequence, read N- to C-terminus: Phenylalanine--tRNA ligase beta subunit (572 aa).

Residues 278 to 353 (LTPKEFEVEF…IAYGYNEIKP (76 aa)) form the B5 domain. Residues Asp-331, Asp-337, Glu-340, and Asp-341 each coordinate Mg(2+).

Belongs to the phenylalanyl-tRNA synthetase beta subunit family. Type 2 subfamily. In terms of assembly, tetramer of two alpha and two beta subunits. Mg(2+) is required as a cofactor.

The protein resides in the cytoplasm. The enzyme catalyses tRNA(Phe) + L-phenylalanine + ATP = L-phenylalanyl-tRNA(Phe) + AMP + diphosphate + H(+). The protein is Phenylalanine--tRNA ligase beta subunit of Thermococcus onnurineus (strain NA1).